The following is a 197-amino-acid chain: Na(+)-translocating NADH-quinone reductase subunit E (197 aa).

The next 6 membrane-spanning stretches (helical) occupy residues 11 to 31 (SVFI…FLAV), 35 to 55 (VSTA…SVPV), 76 to 96 (FLKF…LEMF), 108 to 128 (LGIY…VSFM), 139 to 159 (VVYG…LAGI), and 175 to 195 (LGIT…FSGI).

Belongs to the NqrDE/RnfAE family. As to quaternary structure, composed of six subunits; NqrA, NqrB, NqrC, NqrD, NqrE and NqrF.

It localises to the cell inner membrane. It carries out the reaction a ubiquinone + n Na(+)(in) + NADH + H(+) = a ubiquinol + n Na(+)(out) + NAD(+). Functionally, NQR complex catalyzes the reduction of ubiquinone-1 to ubiquinol by two successive reactions, coupled with the transport of Na(+) ions from the cytoplasm to the periplasm. NqrA to NqrE are probably involved in the second step, the conversion of ubisemiquinone to ubiquinol. In Neisseria meningitidis serogroup C (strain 053442), this protein is Na(+)-translocating NADH-quinone reductase subunit E.